The following is a 592-amino-acid chain: Aspartate--tRNA ligase (592 aa).

Position 171 (glutamate 171) interacts with L-aspartate. An aspartate region spans residues 195–198 (QLFK). Arginine 217 serves as a coordination point for L-aspartate. ATP is bound by residues 217 to 219 (RDE) and glutamine 226. Histidine 448 contacts L-aspartate. Glutamate 482 provides a ligand contact to ATP. Arginine 489 contacts L-aspartate. Residue 534-537 (GLDR) participates in ATP binding.

The protein belongs to the class-II aminoacyl-tRNA synthetase family. Type 1 subfamily. In terms of assembly, homodimer.

It is found in the cytoplasm. It carries out the reaction tRNA(Asp) + L-aspartate + ATP = L-aspartyl-tRNA(Asp) + AMP + diphosphate. In terms of biological role, catalyzes the attachment of L-aspartate to tRNA(Asp) in a two-step reaction: L-aspartate is first activated by ATP to form Asp-AMP and then transferred to the acceptor end of tRNA(Asp). The sequence is that of Aspartate--tRNA ligase from Vibrio vulnificus (strain YJ016).